The sequence spans 1401 residues: DNA-directed RNA polymerase subunit beta'' (1401 aa).

Zn(2+) is bound by residues C224, C294, C301, and C304.

Belongs to the RNA polymerase beta' chain family. RpoC2 subfamily. As to quaternary structure, in plastids the minimal PEP RNA polymerase catalytic core is composed of four subunits: alpha, beta, beta', and beta''. When a (nuclear-encoded) sigma factor is associated with the core the holoenzyme is formed, which can initiate transcription. Zn(2+) is required as a cofactor.

The protein resides in the plastid. The protein localises to the chloroplast. It carries out the reaction RNA(n) + a ribonucleoside 5'-triphosphate = RNA(n+1) + diphosphate. Its function is as follows. DNA-dependent RNA polymerase catalyzes the transcription of DNA into RNA using the four ribonucleoside triphosphates as substrates. This is DNA-directed RNA polymerase subunit beta'' from Nymphaea alba (White water-lily).